Here is a 398-residue protein sequence, read N- to C-terminus: uncharacterized protein (398 aa).

One can recognise a CobW C-terminal domain in the interval 235 to 351 (VAIVEFSARR…DIVNALNAAL (117 aa)).

This is an uncharacterized protein from Mycobacterium bovis (strain ATCC BAA-935 / AF2122/97).